A 432-amino-acid polypeptide reads, in one-letter code: Amino-acid acetyltransferase (432 aa).

Positions 286-425 constitute an N-acetyltransferase domain; that stretch reads EQLREAGIED…ASLYNFQRNS (140 aa).

It belongs to the acetyltransferase family. ArgA subfamily.

It is found in the cytoplasm. The enzyme catalyses L-glutamate + acetyl-CoA = N-acetyl-L-glutamate + CoA + H(+). Its pathway is amino-acid biosynthesis; L-arginine biosynthesis; N(2)-acetyl-L-ornithine from L-glutamate: step 1/4. In Pseudomonas aeruginosa (strain LESB58), this protein is Amino-acid acetyltransferase.